A 202-amino-acid chain; its full sequence is Large ribosomal subunit protein uL18 (202 aa).

The protein belongs to the universal ribosomal protein uL18 family. In terms of assembly, part of the 50S ribosomal subunit. Contacts the 5S and 23S rRNAs.

This is one of the proteins that bind and probably mediate the attachment of the 5S RNA into the large ribosomal subunit, where it forms part of the central protuberance. This Methanopyrus kandleri (strain AV19 / DSM 6324 / JCM 9639 / NBRC 100938) protein is Large ribosomal subunit protein uL18.